Reading from the N-terminus, the 295-residue chain is Inositol polyphosphate multikinase IPK2 (295 aa).

The segment at 1 to 21 (MASDLRPPEHQVAGHRASADK) is disordered.

The protein belongs to the inositol phosphokinase (IPK) family.

The catalysed reaction is 1D-myo-inositol 1,4,5-trisphosphate + 2 ATP = 1D-myo-inositol 1,3,4,5,6-pentakisphosphate + 2 ADP + 2 H(+). The enzyme catalyses 1D-myo-inositol 1,3,4,6-tetrakisphosphate + ATP = 1D-myo-inositol 1,3,4,5,6-pentakisphosphate + ADP + H(+). Inositol phosphate kinase with a broad substrate specificity. Phosphorylates inositol 1,4,5-trisphosphate (Ins(1,4,5)P3), inositol 1,4,5,6-tetrakisphosphate (Ins(1,4,5,6)P4), inositol 1,3,4,5-tetrakisphosphate (Ins(1,3,4,5)P4), inositol 1,3,4,6-tetrakisphosphate (Ins(1,3,4,6)P4) and inositol 1,2,3,4,6-pentakisphosphate (Ins(1,2,3,4,6)P5) but not inositol 1,4-bisphosphate (Ins(1,4)P2), inositol 1,3,4-trisphosphate (Ins(1,3,4)P3), inositol 1,2,6-trisphosphate (Ins(1,2,6)P3), inositol 3,4,5,6-tetrakisphosphate (Ins(3,4,5,6)P4), inositol 1,3,4,5,6-pentakisphosphate (Ins(1,3,4,5,6)P5), inositol 1,2,4,5,6-pentakisphosphate (Ins(1,2,4,5,6)P5) or inositol hexakisphosphate (InsP6). Regulates pollen and root development probably through the regulation of InsP3-mediated calcium accumulation. The sequence is that of Inositol polyphosphate multikinase IPK2 from Oryza sativa subsp. indica (Rice).